A 233-amino-acid polypeptide reads, in one-letter code: Protein-L-isoaspartate O-methyltransferase (233 aa).

Ser83 is an active-site residue.

It belongs to the methyltransferase superfamily. L-isoaspartyl/D-aspartyl protein methyltransferase family.

The protein localises to the cytoplasm. It catalyses the reaction [protein]-L-isoaspartate + S-adenosyl-L-methionine = [protein]-L-isoaspartate alpha-methyl ester + S-adenosyl-L-homocysteine. Functionally, catalyzes the methyl esterification of L-isoaspartyl residues in peptides and proteins that result from spontaneous decomposition of normal L-aspartyl and L-asparaginyl residues. It plays a role in the repair and/or degradation of damaged proteins. This Opitutus terrae (strain DSM 11246 / JCM 15787 / PB90-1) protein is Protein-L-isoaspartate O-methyltransferase.